Here is a 777-residue protein sequence, read N- to C-terminus: Intraflagellar transport protein 80 homolog (777 aa).

WD repeat units lie at residues 12–50, 104–143, 145–185, 186–225, 227–265, 267–306, and 504–542; these read KHQE…TSLI, AHCG…RSTL, QQGI…LQWK, AHDG…LYGS, PHEH…YALE, PNTG…WEWK, and KLGT…YVDR. The segment at 758–777 is disordered; the sequence is TKERDRSSSGQSSKNTGLKP. Polar residues predominate over residues 765-777; that stretch reads SSGQSSKNTGLKP.

In terms of assembly, component of the IFT complex B, at least composed of IFT20, IFT22, IFT25, IFT27, IFT46, IFT52, TRAF3IP1/IFT54, IFT57, IFT74, IFT80, IFT81, and IFT88. Interacts with IFT88. Interacts with IFT57 and IFT70B.

It localises to the cytoplasm. It is found in the cytoskeleton. The protein resides in the cilium basal body. The protein localises to the cilium axoneme. Its function is as follows. Component of the intraflagellar transport (IFT) complex B, which is essential for the development and maintenance of motile and sensory cilia. The chain is Intraflagellar transport protein 80 homolog (Ift80) from Rattus norvegicus (Rat).